A 343-amino-acid polypeptide reads, in one-letter code: GDSL esterase/lipase EXL4 (343 aa).

Positions 1-21 are cleaved as a signal peptide; sequence MCSKITLVLTLFSSYFISTDA. A glycan (N-linked (GlcNAc...) asparagine) is linked at Asn-23. Ser-35 acts as the Nucleophile in catalysis. Catalysis depends on residues Asp-318 and His-321.

The protein belongs to the 'GDSL' lipolytic enzyme family. Flower buds and pollen.

It is found in the secreted. The protein localises to the extracellular space. It localises to the extracellular matrix. The protein resides in the pollen coat. Required for the formation of pollen coats and male fertility. This chain is GDSL esterase/lipase EXL4 (EXL4), found in Arabidopsis thaliana (Mouse-ear cress).